The sequence spans 597 residues: MTSPAKSSTAASSSSQRSLSAWSPLGGERFYAAARWVLIILLGVVTQFLTNGGLWPVTDEIGPLEGIFWLYVGFALVFTVLAFLQFAAGLVSISYLFDIAFISLMTFFGGERIVIFFPLYLVPLTYAAIRQSRSVSLLSGLLAAVAYMAAFIAWRRLIAPEALMTLLDYVALALRGTTLAIVPWVTGNLAERQSEFNRERVTQAQRDAEQALSEARAYRDQMRSLYRVALTLGSTANYRQVLDTLLQESQKIVPYRAGIVLLSSGQPNELYVAFGSNLAPGDLNRSLKMDTGLAAALRANTAQVITSFTQFPSLQQLGSLRTCKAAALLPLQAGMRVYGLFVVATDQTLTTDQVEMLMALANYAIVALHNAQLIYDLKEEREKLLSHEEEVRHQLARDLHDGPAQAMAVITMKAEFIKRLLERDPAQALAELDELSSIAKRTNYEVRTMLFELRPLMLETQGLKVTLEQYLDRLRAKAGNTAIVLEGTDIDKVRLGSKVEGALFNMIQESVTNAIKHAKANHIWVRLRRLNDQMLEVVIQDDGVGFDKAAVLKSYERRGSFGLLNIDERARLVGGRAEIDSTPGKGTQITIFVPIES.

Transmembrane regions (helical) follow at residues Val37–Val57, Ile67–Ala87, Gly109–Ile129, Ser134–Trp154, and Ala162–Val182. The Histidine kinase domain maps to His393–Ser597.

The protein resides in the cell membrane. This is an uncharacterized protein from Chloroflexus aurantiacus (strain ATCC 29366 / DSM 635 / J-10-fl).